The following is a 702-amino-acid chain: MNSLFASTARGLEELLKTELEKLGAVGCQVVQGGVHFQGDTRLIYQSLMWSRLASRIILPMGECKVYSDLDLYLGVQAINWTEIFNPGATFAVHFSGLNDTIRNSQYGAMKVKDAIVDAFTRKNLPRPNVDRESPDLRINVWLNKETASIALDLSGDGLHLRGYRDRTGLAPIKETLAAAIVMRSGWQPGTPLLDPMCGSGTLLIEAAMWATDRAPGLHRGHWGFSGWAQHDEAIWQEVKAEAQTRARKGLAEYSSHFYGSDSDARVIERARSNARRAGIGELITFEVKDVAQLSNPLPKGPYGTVISNPPYGERLDSEPALIALHSLLGRTMKNQFGGWNLSLFSASPDLLGSLQLRADKQFKAKNGPLDCVQKNYHIAETTADSKPATVAEDYANRLRKNLKKLEKWARQEGIECYRLYDADLPEYNVAVDRYGDWAVIQEYAPPKTVDAQKARQRLFDIIAATLSVLGIPPNKLVLKTRERQKGKNQYQKMSEKGEFLEVSEYNARLWVNLTDYLDTGLFLDHRIARRMLGEMSKGKDFLNLFSYTGSASVHAGLGGARSTTTVDMSRTYLEWAERNLRLNGLSGRAHRLIQADCLGWLREANEQFDLIFIDPPTFSNSKRMEESFDVQRDHVALMKDLKRLLRKGGTIMFSNNKRGFRMDLEGLAELGLTAQEITQKTLSPDFARNRQIHNCWLIRAA.

The THUMP domain maps to 43–154; the sequence is LIYQSLMWSR…KETASIALDL (112 aa).

It belongs to the methyltransferase superfamily. RlmKL family.

The protein localises to the cytoplasm. It catalyses the reaction guanosine(2445) in 23S rRNA + S-adenosyl-L-methionine = N(2)-methylguanosine(2445) in 23S rRNA + S-adenosyl-L-homocysteine + H(+). The enzyme catalyses guanosine(2069) in 23S rRNA + S-adenosyl-L-methionine = N(2)-methylguanosine(2069) in 23S rRNA + S-adenosyl-L-homocysteine + H(+). Its function is as follows. Specifically methylates the guanine in position 2445 (m2G2445) and the guanine in position 2069 (m7G2069) of 23S rRNA. The sequence is that of Ribosomal RNA large subunit methyltransferase K/L from Salmonella schwarzengrund (strain CVM19633).